The chain runs to 133 residues: MKLLVGILVAVCLHQYLLNADSNTKGWSEVLKGSECKPRPIVVPVSETHPELTSQRFNPPCVTLMRCGGCCNDESLECVPTEEVNVSMELLGASGSGSNGMQRLSFVEHKKCDCRPRFTTTPPTTTRPPRRRR.

Residues 1–20 form the signal peptide; the sequence is MKLLVGILVAVCLHQYLLNA. Disulfide bonds link Cys36/Cys78, Cys67/Cys112, and Cys71/Cys114. An N-linked (GlcNAc...) asparagine; by host glycan is attached at Asn85.

This sequence belongs to the PDGF/VEGF growth factor family. As to quaternary structure, homodimer; disulfide-linked.

The protein localises to the secreted. Its function is as follows. Induces endothelial proliferation. The chain is Vascular endothelial growth factor homolog from Orf virus (strain NZ2) (OV NZ-2).